Here is a 280-residue protein sequence, read N- to C-terminus: Borealin (280 aa).

The required for interaction with INCENP stretch occupies residues 1–58; the sequence is MAPRKGSSRVAKTNSLRRRKLASFLKDFDREVEIRIKQIESDRQNLLKEVDNLYNIEI. The segment at 1–88 is required for centromere localization; sequence MAPRKGSSRV…NKQALEEAAT (88 aa). The segment at 1–140 is required for interaction with SENP3; that stretch reads MAPRKGSSRV…ENERKNLQTA (140 aa). A required to form a minimal CPC core complex that localizes to the central spindle and midbody and properly executes the role of the CPC during cytokinesis region spans residues 10–109; that stretch reads VAKTNSLRRR…TAEAIQTPLK (100 aa). Positions 20–78 are required for interaction with INCENP and BIRC5; that stretch reads KLASFLKDFDREVEIRIKQIESDRQNLLKEVDNLYNIEILRLPKALREMNWLDYFALGG. Phosphothreonine; by TTK occurs at positions 88 and 94. Threonine 106 carries the phosphothreonine modification. At serine 110 the chain carries Phosphoserine. A disordered region spans residues 130-169; sequence EENERKNLQTARVKRCPPSKKRTQSIQGKGKGKRSSRANT. Residue lysine 135 forms a Glycyl lysine isopeptide (Lys-Gly) (interchain with G-Cter in SUMO2) linkage. Residues 141–152 show a composition bias toward basic residues; it reads RVKRCPPSKKRT. Serine 165 carries the post-translational modification Phosphoserine; by AURKB. At threonine 169 the chain carries Phosphothreonine; by TTK. 2 positions are modified to phosphothreonine: threonine 189 and threonine 204. Phosphoserine occurs at positions 219 and 224. Threonine 230 is modified (phosphothreonine; by TTK). Phosphoserine is present on residues serine 238 and serine 244.

This sequence belongs to the borealin family. May form homooligomers and homodimers. Component of the chromosomal passenger complex (CPC) composed of at least BIRC5/survivin, CDCA8/borealin, INCENP, AURKB or AURKC; in the complex forms a triple-helix bundle-based subcomplex with INCENP and BIRC5. Interacts with SENP3, UBE2I and RANBP2. Interacts (phosphorylated) with SGO1 and SGO2; the association is dependent on CDK1. Post-translationally, phosphorylated by TTK, essentially at Thr-88, Thr94, Thr-169 and Thr-230. Phosphorylation (probably by CDK1) promotes targeting of the CPC to centromeric DNA. Sumoylated by UBE2I and RANBP2. Desumoylated by SENP3 through the removal of SUMO2 and SUMO3.

It localises to the nucleus. It is found in the nucleolus. The protein localises to the cytoplasm. Its subcellular location is the chromosome. The protein resides in the centromere. It localises to the cytoskeleton. It is found in the spindle. Its function is as follows. Component of the chromosomal passenger complex (CPC), a complex that acts as a key regulator of mitosis. The CPC complex has essential functions at the centromere in ensuring correct chromosome alignment and segregation and is required for chromatin-induced microtubule stabilization and spindle assembly. In the complex, it may be required to direct the CPC to centromeric DNA. The polypeptide is Borealin (CDCA8) (Pongo abelii (Sumatran orangutan)).